A 1417-amino-acid chain; its full sequence is DNA-directed RNA polymerase subunit beta' (1417 aa).

Zn(2+)-binding residues include Cys-68, Cys-70, Cys-83, and Cys-86. The Mg(2+) site is built by Asp-458, Asp-460, and Asp-462. Positions 811, 884, 891, and 894 each coordinate Zn(2+).

The protein belongs to the RNA polymerase beta' chain family. In terms of assembly, the RNAP catalytic core consists of 2 alpha, 1 beta, 1 beta' and 1 omega subunit. When a sigma factor is associated with the core the holoenzyme is formed, which can initiate transcription. Mg(2+) serves as cofactor. Zn(2+) is required as a cofactor.

It catalyses the reaction RNA(n) + a ribonucleoside 5'-triphosphate = RNA(n+1) + diphosphate. Its function is as follows. DNA-dependent RNA polymerase catalyzes the transcription of DNA into RNA using the four ribonucleoside triphosphates as substrates. This chain is DNA-directed RNA polymerase subunit beta', found in Francisella tularensis subsp. novicida (strain U112).